Consider the following 326-residue polypeptide: Lipoyl synthase (326 aa).

Residues C68, C73, C79, C94, C98, C101, and S308 each coordinate [4Fe-4S] cluster. Residues 80-297 (FNHGTATFMI…KDVAMGLGFS (218 aa)) enclose the Radical SAM core domain.

It belongs to the radical SAM superfamily. Lipoyl synthase family. Requires [4Fe-4S] cluster as cofactor.

It localises to the cytoplasm. It catalyses the reaction [[Fe-S] cluster scaffold protein carrying a second [4Fe-4S](2+) cluster] + N(6)-octanoyl-L-lysyl-[protein] + 2 oxidized [2Fe-2S]-[ferredoxin] + 2 S-adenosyl-L-methionine + 4 H(+) = [[Fe-S] cluster scaffold protein] + N(6)-[(R)-dihydrolipoyl]-L-lysyl-[protein] + 4 Fe(3+) + 2 hydrogen sulfide + 2 5'-deoxyadenosine + 2 L-methionine + 2 reduced [2Fe-2S]-[ferredoxin]. Its pathway is protein modification; protein lipoylation via endogenous pathway; protein N(6)-(lipoyl)lysine from octanoyl-[acyl-carrier-protein]: step 2/2. Functionally, catalyzes the radical-mediated insertion of two sulfur atoms into the C-6 and C-8 positions of the octanoyl moiety bound to the lipoyl domains of lipoate-dependent enzymes, thereby converting the octanoylated domains into lipoylated derivatives. The protein is Lipoyl synthase of Aeromonas salmonicida (strain A449).